The chain runs to 397 residues: Iripin-2 (397 aa).

The signal sequence occupies residues 1-21 (MEDFKMKTLAAFLSLLVLCWA). N-linked (GlcNAc...) asparagine glycosylation is found at N109 and N270.

This sequence belongs to the serpin family. Interacts with mouse MCPT4. As to expression, female salivary gland. Ovary. Midgut.

It localises to the secreted. Serine protease inhibitor that modulates blood feeding of ticks on vertebrate species. Inhibits host trypsin, thrombin (F2), alpha-chymotrypsin, cathepsin G (CTSG) and mast cell chymase (CMA1). Inhibits host cathepsin G- and thrombin-induced platelet aggregation. Inhibits acute inflammation in the host. Suppresses neutrophil recruitment in inflamed area. Does not inhibit host plasmin (PLG), factor Xa (F10), factor XIa (F11), elastase and proteinase 3/myeloblastin (PRTN3). Its function is as follows. (Microbial infection) Inhibits IL6 production by mouse splenic dendritic cells in response to Borrelia burgdorferi exposure. Decreases levels of STAT3 phosphorylation in mouse splenic dendritic cells in response to Borrelia burgdorferi exposure and in Borrelia-primed CD4+ T-lymphocytes. Inhibits differentiation of mouse Th17 cells, a subset of CD4+ T-lymphocytes that play a crucial role in protection against extracellular bacteria, in response to Borrelia burgdorferi exposure via inhibition of the IL6/STAT3 signaling pathway. The chain is Iripin-2 from Ixodes ricinus (Common tick).